The following is a 368-amino-acid chain: Peptide chain release factor 2 (368 aa).

Q249 is subject to N5-methylglutamine.

It belongs to the prokaryotic/mitochondrial release factor family. In terms of processing, methylated by PrmC. Methylation increases the termination efficiency of RF2.

Its subcellular location is the cytoplasm. Functionally, peptide chain release factor 2 directs the termination of translation in response to the peptide chain termination codons UGA and UAA. The protein is Peptide chain release factor 2 of Rhodococcus erythropolis (strain PR4 / NBRC 100887).